Consider the following 295-residue polypeptide: MMRILLFLATNLAVVLIASITLSLFGFNGFMAANGVDLNLNQLLVFCAVFGFAGSLFSLFISKWMAKMSTSTQVITQPRTRHEQWLLQTVEQLSREAGIKMPEVGIFPAYEANAFATGWNKNDALVAVSQGMLERFSYDEVKAVLAHEIGHVANGDMVTLALVQGVVNTFVMFFARIIGNFVDKVIFKNEGGRGIAYFVATIFAEVVLGFLASAITMWFSRKREFRADEAGARLAGTGAMIAALQHLRSEQGLPVHMPDSLTAFGINGGIKQGMARLFMSHPPLEERIDALRRRG.

The next 2 helical transmembrane spans lie at 4-24 and 42-62; these read ILLF…TLSL and QLLV…LFIS. Zn(2+) is bound at residue histidine 147. Glutamate 148 is a catalytic residue. Histidine 151 is a binding site for Zn(2+). The next 2 helical transmembrane spans lie at 158–178 and 195–215; these read VTLA…ARII and IAYF…ASAI. Glutamate 224 contributes to the Zn(2+) binding site.

The protein belongs to the peptidase M48B family. Zn(2+) serves as cofactor.

The protein localises to the cell inner membrane. The protein is Protease HtpX of Pseudomonas fluorescens (strain SBW25).